Consider the following 805-residue polypeptide: Rho GTPase-activating protein 42 (805 aa).

The region spanning 7–262 is the BAR domain; the sequence is EFSDSFLDSP…IRSAEQDFKA (256 aa). Residues 225-262 are a coiled coil; it reads KQQLQFNLQNTRNNFESTRQEVENLMRRIRSAEQDFKA. The region spanning 265 to 374 is the PH domain; sequence QWTMEGFLYV…WMEAMDGKEP (110 aa). The 197-residue stretch at 376–572 folds into the Rho-GAP domain; it reads YTLPALLSKK…ILIENYDKIF (197 aa). Disordered stretches follow at residues 576–600, 625–725, and 765–805; these read PDPNVPLPHPQSHSQSRGGARRSKA, SDTF…SELL, and VSRS…PGSV. The span at 626 to 654 shows a compositional bias: low complexity; it reads DTFSSSPSSTPMGSMESLSSHSSEQNSCS. Polar residues predominate over residues 670-693; that stretch reads LCWTTPSPSTNGPKSPACTTSPDS. The span at 694–704 shows a compositional bias: basic and acidic residues; sequence SSKEDANKTDG. Positions 710–721 are enriched in polar residues; that stretch reads LSTSPGDRSSPA. Residues 782–793 are compositionally biased toward basic and acidic residues; that stretch reads PPKDGMRFRDDS.

Its function is as follows. May influence blood pressure by functioning as a GTPase-activating protein in vascular smooth muscle. The protein is Rho GTPase-activating protein 42 of Danio rerio (Zebrafish).